A 389-amino-acid chain; its full sequence is Leucine aminopeptidase 1 (389 aa).

The signal sequence occupies residues 1–18; it reads MKSAALLLPLYAAAFAAA. A propeptide spanning residues 19-89 is cleaved from the precursor; sequence AFHHEHAQAV…TLKRRINAAS (71 aa). An N-linked (GlcNAc...) asparagine glycan is attached at asparagine 99. Residues histidine 188, aspartate 207, glutamate 246, and aspartate 273 each contribute to the Zn(2+) site. Residues cysteine 322 and cysteine 326 are joined by a disulfide bond. Residue histidine 355 participates in Zn(2+) binding.

It belongs to the peptidase M28 family. M28E subfamily. Monomer. It depends on Zn(2+) as a cofactor.

The protein resides in the secreted. In terms of biological role, extracellular aminopeptidase that allows assimilation of proteinaceous substrates. The sequence is that of Leucine aminopeptidase 1 (lap1) from Pyrenophora teres f. teres (strain 0-1) (Barley net blotch fungus).